The sequence spans 565 residues: Wee1-like protein kinase 2 (565 aa).

2 disordered regions span residues 18 to 78 (YCEE…KSPE) and 169 to 191 (KSNGKRKTRGDFEEAGPGEGNVE). The segment covering 19 to 29 (CEEESESEGQE) has biased composition (acidic residues). Positions 31–51 (WETRDAHSQIPDRAEGQESEA) are enriched in basic and acidic residues. At S76 the chain carries Phosphoserine. A Nuclear localization signal motif is present at residues 173–175 (KRK). One can recognise a Protein kinase domain in the interval 214 to 492 (FLEVEKIGVG…ARSRVLRPSL (279 aa)). ATP contacts are provided by residues 220 to 228 (IGVGEFGTV) and K243. A Nuclear export signal motif is present at residues 317–331 (KLKDILLQISLGLKY). D341 acts as the Proton acceptor in catalysis. Residues N346 and D382 each coordinate Mg(2+). A coiled-coil region spans residues 495–521 (AEELQQQLNLEKFKTATLERELREAQQ). The interval 521 to 565 (QAWFSQEERGDAGVSGTPTGSRSTKRLVGGKSAKSSSFTWGKSSP) is disordered. The segment covering 553 to 565 (AKSSSFTWGKSSP) has biased composition (polar residues).

It belongs to the protein kinase superfamily. Ser/Thr protein kinase family. WEE1 subfamily. Post-translationally, phosphorylation leads to increase its activity.

Its subcellular location is the nucleus. The enzyme catalyses L-tyrosyl-[protein] + ATP = O-phospho-L-tyrosyl-[protein] + ADP + H(+). Its function is as follows. Oocyte-specific protein tyrosine kinase that phosphorylates and inhibits CDK1 and acts as a key regulator of meiosis during both prophase I and metaphase II. Required to maintain meiotic arrest in oocytes during the germinal vesicle (GV) stage, a long period of quiescence at dictyate prophase I, by phosphorylating CDK1 at 'Tyr-15', leading to inhibit CDK1 activity and prevent meiotic reentry. Also required for metaphase II exit during egg activation by phosphorylating CDK1 at 'Tyr-15', to ensure exit from meiosis in oocytes and promote pronuclear formation. The polypeptide is Wee1-like protein kinase 2 (WEE2) (Ailuropoda melanoleuca (Giant panda)).